The sequence spans 1286 residues: DNA-directed RNA polymerase 147 kDa polypeptide (1286 aa).

It belongs to the poxviridae DNA-directed RNA polymerase 147 kDa subunit family. In terms of assembly, the DNA-dependent RNA polymerase used for intermediate and late genes expression consists of eight subunits Rpo30/OPG66, Rpo7/OPG90, Rpo22/OPG103, Rpo147/OPG105, Rpo18/OPG119, Rpo19/OPG131, Rpo132/OPG151 and Rpo35/OPG156. The same holoenzyme, with the addition of the transcription-specificity factor OPG109, is used for early gene expression.

It localises to the virion. The enzyme catalyses RNA(n) + a ribonucleoside 5'-triphosphate = RNA(n+1) + diphosphate. In terms of biological role, part of the DNA-dependent RNA polymerase which catalyzes the transcription of viral DNA into RNA using the four ribonucleoside triphosphates as substrates. Responsible for the transcription of early, intermediate and late genes. DNA-dependent RNA polymerase associates with the early transcription factor (ETF), itself composed of OPG118 and OPG133, thereby allowing the early genes transcription. Late transcription, and probably also intermediate transcription, require newly synthesized RNA polymerase. This Vaccinia virus (strain Ankara) (VACV) protein is DNA-directed RNA polymerase 147 kDa polypeptide (OPG105).